We begin with the raw amino-acid sequence, 183 residues long: Isopentenyl-diphosphate Delta-isomerase (183 aa).

His-26 and His-33 together coordinate Mn(2+). A Nudix hydrolase domain is found at Ser-31–Ser-165. Cys-68 is an active-site residue. A Mn(2+)-binding site is contributed by His-70. Glu-88 is a binding site for Mg(2+). Mn(2+) contacts are provided by Glu-115 and Glu-117. The active site involves Glu-117.

Belongs to the IPP isomerase type 1 family. Homodimer. It depends on Mg(2+) as a cofactor. The cofactor is Mn(2+).

It is found in the cytoplasm. The enzyme catalyses isopentenyl diphosphate = dimethylallyl diphosphate. It participates in isoprenoid biosynthesis; dimethylallyl diphosphate biosynthesis; dimethylallyl diphosphate from isopentenyl diphosphate: step 1/1. Catalyzes the 1,3-allylic rearrangement of the homoallylic substrate isopentenyl (IPP) to its highly electrophilic allylic isomer, dimethylallyl diphosphate (DMAPP). This is Isopentenyl-diphosphate Delta-isomerase from Enterobacter sp. (strain 638).